The primary structure comprises 128 residues: Protein Wnt-8 (128 aa).

The O-palmitoleoyl serine moiety is linked to residue serine 1. 2 disulfides stabilise this stretch: cysteine 69–cysteine 109 and cysteine 85–cysteine 102. A glycan (N-linked (GlcNAc...) asparagine) is linked at asparagine 72.

The protein belongs to the Wnt family. Palmitoleoylation is required for efficient binding to frizzled receptors. Depalmitoleoylation leads to Wnt signaling pathway inhibition. Post-translationally, proteolytic processing by tiki1 and tiki2 promotes oxidation and formation of large disulfide-bond oligomers, leading to inactivation of wnt8.

The protein localises to the secreted. It localises to the extracellular space. It is found in the extracellular matrix. In terms of biological role, ligand for members of the frizzled family of seven transmembrane receptors. Probable developmental protein. May be a signaling molecule which affects the development of discrete regions of tissues. Is likely to signal over only few cell diameters. The sequence is that of Protein Wnt-8 (WNT-8) from Evasterias troschelii (Mottled sea star).